The following is a 180-amino-acid chain: Transmembrane protein 190 (180 aa).

An N-terminal signal peptide occupies residues 1-21 (MVGSGIPALGLLLLMQGSADG). Over 22–81 (NGIQGFFYPWSCEGDVWDRESCGGQAAIENPNLCLRLRCCYRDGVCYHQRPDENMRRKHM) the chain is Extracellular. The region spanning 31 to 71 (WSCEGDVWDRESCGGQAAIENPNLCLRLRCCYRDGVCYHQR) is the P-type domain. 3 cysteine pairs are disulfide-bonded: C33/C61, C43/C60, and C55/C67. A helical membrane pass occupies residues 82 to 102 (WALGWTCGGLLFLITSICLFW). Topologically, residues 103–180 (WARRHDMLRL…EETEGGDEDD (78 aa)) are cytoplasmic. The segment covering 131–140 (KDRTPSEKKT) has biased composition (basic and acidic residues). The interval 131–180 (KDRTPSEKKTPSVGSIPPAAPTEGALDVSGGTEGEGTEGGEETEGGDEDD) is disordered. A compositionally biased stretch (acidic residues) spans 165-180 (EGTEGGEETEGGDEDD).

The protein resides in the membrane. In Bos taurus (Bovine), this protein is Transmembrane protein 190 (TMEM190).